Consider the following 745-residue polypeptide: MITSLSQISFGTLRRFGSSVLPSALKREFVEGLRTLVRSGDIRRAVSLFYSAPVELQSQQAYAALFQACAEQRNLLDGINLHHHMLSHPYCYSQNVILANFLINMYAKCGNILYARQVFDTMPERNVVSWTALITGYVQAGNEQEGFCLFSSMLSHCFPNEFTLSSVLTSCRYEPGKQVHGLALKLGLHCSIYVANAVISMYGRCHDGAAAYEAWTVFEAIKFKNLVTWNSMIAAFQCCNLGKKAIGVFMRMHSDGVGFDRATLLNICSSLYKSSDLVPNEVSKCCLQLHSLTVKSGLVTQTEVATALIKVYSEMLEDYTDCYKLFMEMSHCRDIVAWNGIITAFAVYDPERAIHLFGQLRQEKLSPDWYTFSSVLKACAGLVTARHALSIHAQVIKGGFLADTVLNNSLIHAYAKCGSLDLCMRVFDDMDSRDVVSWNSMLKAYSLHGQVDSILPVFQKMDINPDSATFIALLSACSHAGRVEEGLRIFRSMFEKPETLPQLNHYACVIDMLSRAERFAEAEEVIKQMPMDPDAVVWIALLGSCRKHGNTRLGKLAADKLKELVEPTNSMSYIQMSNIYNAEGSFNEANLSIKEMETWRVRKEPDLSWTEIGNKVHEFASGGRHRPDKEAVYRELKRLISWLKEMGYVPEMRSASQDIEDEEQEEDNLLHHSEKLALAFAVMEGRKSSDCGVNLIQIMKNTRICIDCHNFMKLASKLLGKEILMRDSNRFHHFKDSSCSCNDYW.

13 PPR repeats span residues 58-88 (SQQA…MLSH), 95-125 (NVIL…MPER), 126-160 (NVVS…CFPN), 191-224 (SIYV…IKFK), 225-259 (NLVT…GVGF), 260-296 (DRAT…TVKS), 301-332 (QTEV…MSHC), 334-367 (DIVA…KLSP), 368-402 (DWYT…GFLA), 403-437 (DTVL…DVVS), 438-464 (WNSM…MDIN), 466-496 (DSAT…MFEK), and 502-532 (QLNH…MPMD). The tract at residues 537–613 (VWIALLGSCR…EPDLSWTEIG (77 aa)) is type E motif. Residues 614-644 (NKVHEFASGGRHRPDKEAVYRELKRLISWLK) form a type E(+) motif region. A type DYW motif region spans residues 645–745 (EMGYVPEMRS…DSSCSCNDYW (101 aa)).

Belongs to the PPR family. PCMP-H subfamily.

The protein is Pentatricopeptide repeat-containing protein At1g71420 (PCMP-H70) of Arabidopsis thaliana (Mouse-ear cress).